Reading from the N-terminus, the 465-residue chain is Type II restriction enzyme BsuMI component YdjA (465 aa).

In terms of assembly, bsuMI restriction activity requires YdiR, YdiS and YdjA.

The catalysed reaction is Endonucleolytic cleavage of DNA to give specific double-stranded fragments with terminal 5'-phosphates.. Functionally, a P subtype restriction enzyme that recognizes the double-stranded sequence 5'-CTCGAG-3'; the cleavage site is unknown. The protein is Type II restriction enzyme BsuMI component YdjA (ydjA) of Bacillus subtilis (strain 168).